Consider the following 125-residue polypeptide: MSAGYRKAMLESEIQKVLTEALRNFKGESEIDPTLVSIVRIELSKDKRYANIFVSYLGNDEEKKKAVEFMEENKGYFRTAVAKNIRLFKAPELRFHEDIGIEASLRISKILEEIKKQEQEKEENE.

Belongs to the RbfA family. In terms of assembly, monomer. Binds 30S ribosomal subunits, but not 50S ribosomal subunits or 70S ribosomes.

It is found in the cytoplasm. Functionally, one of several proteins that assist in the late maturation steps of the functional core of the 30S ribosomal subunit. Associates with free 30S ribosomal subunits (but not with 30S subunits that are part of 70S ribosomes or polysomes). Required for efficient processing of 16S rRNA. May interact with the 5'-terminal helix region of 16S rRNA. The sequence is that of Ribosome-binding factor A from Kosmotoga olearia (strain ATCC BAA-1733 / DSM 21960 / TBF 19.5.1).